The chain runs to 87 residues: Acyl-CoA-binding protein (87 aa).

The ACB domain maps to 3-87 (LKEEFEEHAV…KVKQLLEESA (85 aa)). Residues 30–34 (YGLYK), Lys-56, and Tyr-75 each bind an acyl-CoA.

Belongs to the ACBP family.

Binds medium- and long-chain acyl-CoA esters with very high affinity and may function as an intracellular carrier of acyl-CoA esters. The chain is Acyl-CoA-binding protein (ACABP) from Fritillaria agrestis (Stinkbells).